Reading from the N-terminus, the 389-residue chain is Probable L-tyrosine/L-aspartate decarboxylase (389 aa).

Lysine 233 carries the post-translational modification N6-(pyridoxal phosphate)lysine.

This sequence belongs to the group II decarboxylase family. MfnA subfamily. It depends on pyridoxal 5'-phosphate as a cofactor.

It carries out the reaction L-tyrosine + H(+) = tyramine + CO2. It catalyses the reaction L-aspartate + H(+) = beta-alanine + CO2. It functions in the pathway cofactor biosynthesis; methanofuran biosynthesis. The protein operates within cofactor biosynthesis; coenzyme A biosynthesis. Functionally, catalyzes the decarboxylation of L-tyrosine to produce tyramine for methanofuran biosynthesis. Can also catalyze the decarboxylation of L-aspartate to produce beta-alanine for coenzyme A (CoA) biosynthesis. This is Probable L-tyrosine/L-aspartate decarboxylase from Methanosphaera stadtmanae (strain ATCC 43021 / DSM 3091 / JCM 11832 / MCB-3).